An 82-amino-acid polypeptide reads, in one-letter code: Putative antitoxin VapB23 (82 aa).

In terms of biological role, putative antitoxin component of a possible type II toxin-antitoxin (TA) system. The cognate toxin is VapC23. The protein is Putative antitoxin VapB23 (vapB23) of Mycobacterium tuberculosis (strain ATCC 25618 / H37Rv).